Here is a 316-residue protein sequence, read N- to C-terminus: Myb-related protein 306 (316 aa).

HTH myb-type domains are found at residues 9–65 (KIGV…RPGI) and 66–116 (KRGD…KKKL). 2 consecutive DNA-binding regions (H-T-H motif) follow at residues 37-61 (WRAI…TNYL) and 89-112 (WAAI…NTHL). 3 disordered regions span residues 119-144 (LQSP…SKGQ), 168-193 (KTSS…QAST), and 209-230 (KKSP…TTTS). Basic and acidic residues predominate over residues 135–144 (DSDKSVSKGQ). A compositionally biased stretch (polar residues) spans 181 to 193 (VQTTQPRPFQAST). Low complexity predominate over residues 216-230 (SSTSQAGSSESTTTS).

As to expression, expressed in flowers, leaves and weakly in seed pods.

It is found in the nucleus. Functionally, transcription factor. This is Myb-related protein 306 from Antirrhinum majus (Garden snapdragon).